Reading from the N-terminus, the 140-residue chain is Large ribosomal subunit protein uL14 (140 aa).

This sequence belongs to the universal ribosomal protein uL14 family. As to quaternary structure, component of the large ribosomal subunit.

The protein localises to the cytoplasm. Component of the large ribosomal subunit. The ribosome is a large ribonucleoprotein complex responsible for the synthesis of proteins in the cell. The sequence is that of Large ribosomal subunit protein uL14 (rpl23) from Ictalurus punctatus (Channel catfish).